The chain runs to 300 residues: Probable phytol kinase, chloroplastic (300 aa).

A chloroplast-targeting transit peptide spans 1–36 (MAAARPALPSSPTSLLLARSTSAPDLAARRPRRWLV). The next 7 membrane-spanning stretches (helical) occupy residues 60-78 (LLRD…YSLV), 98-118 (VVHV…SNST), 122-142 (FFAA…GLGF), 168-188 (YVIV…IGIV), 227-247 (FISG…LGYI), 254-274 (ALGK…IPVT), and 276-296 (VVDD…LLFG).

The protein belongs to the polyprenol kinase family.

The protein localises to the plastid. It localises to the chloroplast membrane. It catalyses the reaction phytol + CTP = phytyl phosphate + CDP + H(+). Its pathway is cofactor biosynthesis; tocopherol biosynthesis. Involved in the activation and reutilization of phytol from chlorophyll degradation in plant metabolism, including tocopherol biosynthesis. Catalyzes the conversion of phytol to phytol monophosphate (PMP). The polypeptide is Probable phytol kinase, chloroplastic (Triticum aestivum (Wheat)).